Reading from the N-terminus, the 278-residue chain is Nudix hydrolase 2 (278 aa).

The 133-residue stretch at 110-242 (SHRVGIGAFV…ELLRYMTDIC (133 aa)) folds into the Nudix hydrolase domain. The Nudix box motif lies at 147–168 (GVVNEGEDIHDGSVREVKEETG). Glu162 contributes to the Mg(2+) binding site. Glu165 acts as the Proton acceptor in catalysis. Glu166 contacts Mg(2+).

It belongs to the Nudix hydrolase family. The cofactor is Mg(2+). Mn(2+) serves as cofactor. In terms of tissue distribution, expressed in roots, stems and leaves.

The catalysed reaction is ADP-D-ribose + H2O = D-ribose 5-phosphate + AMP + 2 H(+). It carries out the reaction NAD(+) + H2O = beta-nicotinamide D-ribonucleotide + AMP + 2 H(+). The enzyme catalyses NADH + H2O = reduced beta-nicotinamide D-ribonucleotide + AMP + 2 H(+). Functionally, probably mediates the hydrolysis of some nucleoside diphosphate derivatives. In vitro, it can use both NADH and ADP-ribose as substrates; however the relevance of such substrates in vivo is unclear. Confers tolerance to oxidative stress. In Arabidopsis thaliana (Mouse-ear cress), this protein is Nudix hydrolase 2.